The sequence spans 98 residues: NADH-quinone oxidoreductase subunit K (98 aa).

3 helical membrane-spanning segments follow: residues 1–21 (MGHL…GIFL), 27–47 (IVLL…FIAF), and 59–79 (FVFF…AILV).

Belongs to the complex I subunit 4L family. NDH-1 is composed of 14 different subunits. Subunits NuoA, H, J, K, L, M, N constitute the membrane sector of the complex.

Its subcellular location is the cell inner membrane. It carries out the reaction a quinone + NADH + 5 H(+)(in) = a quinol + NAD(+) + 4 H(+)(out). NDH-1 shuttles electrons from NADH, via FMN and iron-sulfur (Fe-S) centers, to quinones in the respiratory chain. The immediate electron acceptor for the enzyme in this species is believed to be ubiquinone. Couples the redox reaction to proton translocation (for every two electrons transferred, four hydrogen ions are translocated across the cytoplasmic membrane), and thus conserves the redox energy in a proton gradient. The sequence is that of NADH-quinone oxidoreductase subunit K from Xanthomonas oryzae pv. oryzae (strain PXO99A).